Consider the following 2221-residue polypeptide: Voltage-dependent L-type calcium channel subunit alpha-1C (2221 aa).

Positions 1 to 20 (MVNENTRMYIPEENHQGSNY) are disordered. Topologically, residues 1-124 (MVNENTRMYI…RACISIVEWK (124 aa)) are cytoplasmic. Residues 47-68 (GAALSWQAAIDAARQAKLMGSA) are calmodulin-binding. Positions 73 to 98 (ISTVSSTQRKRQQYGKPKKQGSTTAT) are disordered. Residues 80 to 91 (QRKRQQYGKPKK) show a composition bias toward basic residues. One copy of the I repeat lies at 111–408 (NPIRRACISI…LVLGVLSGEF (298 aa)). Residues 125 to 143 (PFEIIILLTIFANCVALAI) form a helical membrane-spanning segment. Residues 144–158 (YIPFPEDDSNATNSN) lie on the Extracellular side of the membrane. N-linked (GlcNAc...) asparagine glycosylation is present at Asn153. The helical transmembrane segment at 159–179 (LERVEYLFLIIFTVEAFLKVI) threads the bilayer. At 180–188 (AYGLLFHPN) the chain is on the cytoplasmic side. The chain crosses the membrane as a helical span at residues 189-209 (AYLRNGWNLLDFIIVVVGLFS). Topologically, residues 210–232 (AILEQATKADGANALGGKGAGFD) are extracellular. The chain crosses the membrane as a helical span at residues 233–251 (VKALRAFRVLRPLRLVSGV). Residues 252 to 268 (PSLQVVLNSIIKAMVPL) lie on the Cytoplasmic side of the membrane. A helical transmembrane segment spans residues 269–290 (LHIALLVLFVIIIYAIIGLELF). The Extracellular segment spans residues 291–350 (MGKMHKTCYNQEGIADVPAEDDPSPCALETGHGRQCQNGTVCKPGWDGPKHGITNFDNFA). Intrachain disulfides connect Cys298–Cys326 and Cys316–Cys332. Asn328 carries N-linked (GlcNAc...) asparagine glycosylation. The segment at residues 351–372 (FAMLTVFQCITMEGWTDVLYWV) is an intramembrane region (pore-forming). The Selectivity filter of repeat I signature appears at 361–364 (TMEG). Glu363 provides a ligand contact to Ca(2+). Residues 373–380 (NDAVGRDW) are Extracellular-facing. A helical transmembrane segment spans residues 381–401 (PWIYFVTLIIIGSFFVLNLVL). The Cytoplasmic segment spans residues 402-524 (GVLSGEFSKE…RKCRAAVKSN (123 aa)). Positions 428 to 445 (QQLEEDLKGYLDWITQAE) are AID/alpha-interaction domain; mediates interaction with the beta subunit. Residues 449–481 (PENEDEGMDEEKPRNMSMPTSETESVNTENVAG) are disordered. Positions 465-478 (SMPTSETESVNTEN) are enriched in polar residues. Ser469 bears the Phosphoserine mark. Thr476 carries the post-translational modification Phosphothreonine. The stretch at 510-756 (NRFCRRKCRA…VFLAIAVDNL (247 aa)) is one II repeat. The chain crosses the membrane as a helical span at residues 525 to 543 (VFYWLVIFLVFLNTLTIAS). At 544–554 (EHYNQPNWLTE) the chain is on the extracellular side. The chain crosses the membrane as a helical span at residues 555 to 575 (VQDTANKALLALFTAEMLLKM). Topologically, residues 576–586 (YSLGLQAYFVS) are cytoplasmic. The helical transmembrane segment at 587–606 (LFNRFDCFVVCGGILETILV) threads the bilayer. Residues 607-615 (ETKIMSPLG) lie on the Extracellular side of the membrane. Residues 616–634 (ISVLRCVRLLRIFKITRYW) traverse the membrane as a helical segment. The Cytoplasmic segment spans residues 635–653 (NSLSNLVASLLNSVRSIAS). The chain crosses the membrane as a helical span at residues 654–673 (LLLLLFLFIIIFSLLGMQLF). Topologically, residues 674 to 693 (GGKFNFDEMQTRRSTFDNFP) are extracellular. Positions 694–715 (QSLLTVFQILTGEDWNSVMYDG) form an intramembrane region, pore-forming. Residues 704–707 (TGED) carry the Selectivity filter of repeat II motif. Glu706 lines the Ca(2+) pocket. The Extracellular segment spans residues 716 to 725 (IMAYGGPSFP). Residues 726–745 (GMLVCIYFIILFICGNYILL) form a helical membrane-spanning segment. At 746–900 (NVFLAIAVDN…LQCHRIVNDT (155 aa)) the chain is on the cytoplasmic side. The tract at residues 764 to 861 (SAQKEEEEEK…EMPVGPRPRP (98 aa)) is disordered. The segment covering 783-792 (SPEKKQELVE) has biased composition (basic and acidic residues). Phosphoserine occurs at positions 808 and 815. The interaction with STAC2 stretch occupies residues 829 to 876 (NENEDKSPYPNPETTGEEDEEEPEMPVGPRPRPLSELHLKEKAVPMPE). Acidic residues predominate over residues 843-852 (TGEEDEEEPE). The stretch at 887 to 1189 (NRFRLQCHRI…IFVGFVIVTF (303 aa)) is one III repeat. Residues 901 to 919 (IFTNLILFFILLSSISLAA) form a helical membrane-spanning segment. The Extracellular portion of the chain corresponds to 920 to 931 (EDPVQHTSFRNH). The chain crosses the membrane as a helical span at residues 932 to 952 (ILFYFDIVFTTIFTIEIALKI). The Cytoplasmic portion of the chain corresponds to 953-987 (LGNADYVFTSIFTLEIILKMTAYGAFLHKGSFCRN). Residues 988–1006 (YFNILDLLVVSVSLISFGI) form a helical membrane-spanning segment. Residues 1007-1013 (QSSAINV) are Extracellular-facing. The helical transmembrane segment at 1014-1032 (VKILRVLRVLRPLRAINRA) threads the bilayer. Residues 1033-1051 (KGLKHVVQCVFVAIRTIGN) lie on the Cytoplasmic side of the membrane. A helical membrane pass occupies residues 1052–1071 (IVIVTTLLQFMFACIGVQLF). Residues 1072 to 1121 (KGKLYTCSDSSKQTEAECKGNYITYKDGEVDHPIIQPRSWENSKFDFDNV) are Extracellular-facing. Cys1078 and Cys1089 are disulfide-bonded. Positions 1109 to 1198 (RSWENSKFDF…FQEQGEQEYK (90 aa)) are dihydropyridine binding. Positions 1122–1142 (LAAMMALFTVSTFEGWPELLY) form an intramembrane region, pore-forming. Residues 1133 to 1136 (TFEG) carry the Selectivity filter of repeat III motif. Glu1135 lines the Ca(2+) pocket. The Extracellular portion of the chain corresponds to 1143–1159 (RSIDSHTEDKGPIYNYR). Residues 1160 to 1181 (VEISIFFIIYIIIIAFFMMNIF) traverse the membrane as a helical segment. Over 1182–1239 (VGFVIVTFQEQGEQEYKNCELDKNQRQCVEYALKARPLRRYIPKNQHQYKVWYVVNST) the chain is Cytoplasmic. The stretch at 1226-1527 (NQHQYKVWYV…LFVAVIMDNF (302 aa)) is one IV repeat. A helical transmembrane segment spans residues 1240–1261 (YFEYLMFVLILLNTICLAMQHY). Over 1262-1269 (GQSCLFKI) the chain is Extracellular. A helical membrane pass occupies residues 1270 to 1291 (AMNILNMLFTGLFTVEMILKLI). The Cytoplasmic portion of the chain corresponds to 1292 to 1301 (AFKPKGYFSD). Residues 1302-1321 (PWNVFDFLIVIGSIIDVILS) form a helical membrane-spanning segment. Residues 1322–1372 (ETNHYFCDAWNTFDALIVVGSIVDIAITEVNPAEHTQCSPSMNAEENSRIS) are Extracellular-facing. The helical transmembrane segment at 1373–1391 (ITFFRLFRVMRLVKLLSRG) threads the bilayer. Residues 1392–1409 (EGIRTLLWTFIKSFQALP) lie on the Cytoplasmic side of the membrane. The helical transmembrane segment at 1410 to 1430 (YVALLIVMLFFIYAVIGMQVF) threads the bilayer. The Extracellular segment spans residues 1431 to 1452 (GKIALNDTTEINRNNNFQTFPQ). N-linked (GlcNAc...) asparagine glycosylation is present at Asn1436. Residues 1453 to 1471 (AVLLLFRCATGEAWQDIML) constitute an intramembrane region (pore-forming). Residues 1462–1465 (TGEA) carry the Selectivity filter of repeat IV motif. Over 1472–1499 (ACMPGKKCAPESEPSNSTEGETPCGSSF) the chain is Extracellular. The interval 1478–1546 (KCAPESEPSN…LGPHHLDEFK (69 aa)) is dihydropyridine binding. Cys1479 and Cys1495 are joined by a disulfide. N-linked (GlcNAc...) asparagine glycosylation is present at Asn1487. Positions 1492–1534 (ETPCGSSFAVFYFISFYMLCAFLIINLFVAVIMDNFDYLTRDW) are phenylalkylamine binding. A helical transmembrane segment spans residues 1500 to 1524 (AVFYFISFYMLCAFLIINLFVAVIM). Residues 1525 to 2221 (DNFDYLTRDW…QDSRVYVSSL (697 aa)) are Cytoplasmic-facing. Residues 1659-1686 (DEVTVGKFYATFLIQEYFRKFKKRKEQG) form an important for interaction with STAC1, STAC2 and STAC3 region. The interval 1665-1685 (KFYATFLIQEYFRKFKKRKEQ) is calmodulin-binding IQ region. An important for localization in at the junctional membrane region spans residues 1699-1718 (LQAGLRTLHDIGPEIRRAIS). 2 positions are modified to phosphoserine: Ser1718 and Ser1739. The segment at 1778–1847 (INKAGSSQGD…TVEGHGPPLS (70 aa)) is disordered. A compositionally biased stretch (polar residues) spans 1799–1811 (STFTPSSYSSTGS). The segment covering 1812–1822 (NANINNANNTA) has biased composition (low complexity). Phosphoserine; by PKA is present on Ser1981. Disordered stretches follow at residues 2029–2063 (ASFP…VESS) and 2186–2221 (AGQD…VSSL).

The protein belongs to the calcium channel alpha-1 subunit (TC 1.A.1.11) family. CACNA1C subfamily. Component of a calcium channel complex consisting of a pore-forming alpha subunit (CACNA1C) and ancillary beta, gamma and delta subunits. The channel complex contains alpha, beta, gamma and delta subunits in a 1:1:1:1 ratio, i.e. it contains only one of each type of subunit. CACNA1C channel activity is modulated by ancillary subunits, such as CACNB1, CACNB2, CACNB3, CACNA2D1 and CACNA2D4. Interacts with the gamma subunits CACNG4, CACNG6, CACNG7 and CACNG8. Interacts with CACNB1. Interacts with CACNB2. Identified in a complex with CACNA2D4 and CACNB3. Interacts with CACNB3. Interacts with CACNA2D1. Interacts with CACNA2D4. Interacts with CALM1. Interacts (via the N-terminus and the C-terminal C and IQ motifs) with CABP1; this inhibits Ca(2+)-dependent channel inactivation. The binding via the C motif is calcium independent whereas the binding via IQ requires the presence of calcium and is mutually exclusive with calmodulin binding. The binding to the cytoplasmic N-terminal domain is calcium independent but is essential for the channel modulation. Interacts (via C-terminal CDB motif) with CABP5; in a calcium-dependent manner. Interacts with CIB1; the interaction increases upon cardiomyocytes hypertrophy. Interacts with STAC2 and STAC3; this inhibits channel inactivation. As to quaternary structure, (Microbial infection) Interacts with influenzavirus H1 hemagglutinin. Post-translationally, phosphorylation by PKA at Ser-1981 activates the channel. Elevated levels of blood glucose lead to increased phosphorylation by PKA. Detected throughout the brain, including hippocampus, cerebellum and amygdala, throughout the heart and vascular system, including ductus arteriosus, in urinary bladder, and in retina and sclera in the eye. Expressed in brain, heart, jejunum, ovary, pancreatic beta-cells and vascular smooth muscle. Overall expression is reduced in atherosclerotic vascular smooth muscle.

The protein resides in the cell membrane. It is found in the sarcolemma. Its subcellular location is the perikaryon. It localises to the postsynaptic density membrane. The protein localises to the cell projection. The protein resides in the dendrite. It is found in the T-tubule. The catalysed reaction is Ca(2+)(in) = Ca(2+)(out). Its activity is regulated as follows. Inhibited by dihydropyridines (DHP), such as isradipine. Inhibited by nifedipine. Channel activity is regulated by Ca(2+) and calmodulin. Binding of STAC1, STAC2 or STAC3 to a region that overlaps with the calmodulin binding site inhibits channel inactivation by Ca(2+) and calmodulin. Binding of calmodulin or CABP1 at the same regulatory sites results in opposite effects on the channel function. Shear stress and pressure increases calcium channel activity. In terms of biological role, pore-forming, alpha-1C subunit of the voltage-gated calcium channel that gives rise to L-type calcium currents. Mediates influx of calcium ions into the cytoplasm, and thereby triggers calcium release from the sarcoplasm. Plays an important role in excitation-contraction coupling in the heart. Required for normal heart development and normal regulation of heart rhythm. Required for normal contraction of smooth muscle cells in blood vessels and in the intestine. Essential for normal blood pressure regulation via its role in the contraction of arterial smooth muscle cells. Long-lasting (L-type) calcium channels belong to the 'high-voltage activated' (HVA) group. Its function is as follows. Pore-forming, alpha-1C subunit of the voltage-gated calcium channel that gives rise to L-type calcium currents. Functionally, (Microbial infection) Acts as a receptor for Influenzavirus. May play a critical role in allowing virus entry when sialylated and expressed on lung tissues. This chain is Voltage-dependent L-type calcium channel subunit alpha-1C (CACNA1C), found in Homo sapiens (Human).